A 208-amino-acid chain; its full sequence is 3-isopropylmalate dehydratase small subunit 2 (208 aa).

This sequence belongs to the LeuD family. LeuD type 1 subfamily. As to quaternary structure, heterodimer of LeuC and LeuD.

The enzyme catalyses (2R,3S)-3-isopropylmalate = (2S)-2-isopropylmalate. Its pathway is amino-acid biosynthesis; L-leucine biosynthesis; L-leucine from 3-methyl-2-oxobutanoate: step 2/4. Catalyzes the isomerization between 2-isopropylmalate and 3-isopropylmalate, via the formation of 2-isopropylmaleate. The polypeptide is 3-isopropylmalate dehydratase small subunit 2 (Salmonella choleraesuis (strain SC-B67)).